A 213-amino-acid polypeptide reads, in one-letter code: Imidazole glycerol phosphate synthase subunit HisH (213 aa).

The region spanning 1-212 (MLAILDYKAG…HRYCTEAADA (212 aa)) is the Glutamine amidotransferase type-1 domain. The active-site Nucleophile is the Cys79. Active-site residues include His187 and Glu189.

Heterodimer of HisH and HisF.

The protein localises to the cytoplasm. The enzyme catalyses 5-[(5-phospho-1-deoxy-D-ribulos-1-ylimino)methylamino]-1-(5-phospho-beta-D-ribosyl)imidazole-4-carboxamide + L-glutamine = D-erythro-1-(imidazol-4-yl)glycerol 3-phosphate + 5-amino-1-(5-phospho-beta-D-ribosyl)imidazole-4-carboxamide + L-glutamate + H(+). The catalysed reaction is L-glutamine + H2O = L-glutamate + NH4(+). The protein operates within amino-acid biosynthesis; L-histidine biosynthesis; L-histidine from 5-phospho-alpha-D-ribose 1-diphosphate: step 5/9. In terms of biological role, IGPS catalyzes the conversion of PRFAR and glutamine to IGP, AICAR and glutamate. The HisH subunit catalyzes the hydrolysis of glutamine to glutamate and ammonia as part of the synthesis of IGP and AICAR. The resulting ammonia molecule is channeled to the active site of HisF. This Nitratidesulfovibrio vulgaris (strain ATCC 29579 / DSM 644 / CCUG 34227 / NCIMB 8303 / VKM B-1760 / Hildenborough) (Desulfovibrio vulgaris) protein is Imidazole glycerol phosphate synthase subunit HisH.